Consider the following 377-residue polypeptide: Flap endonuclease 1 (377 aa).

Positions 1 to 104 (MGIQGLAKLL…GELAKRTERR (104 aa)) are N-domain. Position 34 (Asp-34) interacts with Mg(2+). DNA-binding residues include Arg-47 and Arg-70. 5 residues coordinate Mg(2+): Asp-86, Glu-158, Glu-160, Asp-179, and Asp-181. Residues 122–253 (NIDKFSRRLV…KRSVDLIRQH (132 aa)) form an I-domain region. Residue Glu-158 coordinates DNA. DNA is bound by residues Gly-231 and Asp-233. Asp-233 lines the Mg(2+) pocket. Residues 336 to 344 (TQGRLDSFF) form an interaction with PCNA region. Residues 337 to 377 (QGRLDSFFKVLPSPANKRKLQDGKGSQNKKAKTGGKFKRPK) form a disordered region. Basic residues predominate over residues 363–377 (QNKKAKTGGKFKRPK).

It belongs to the XPG/RAD2 endonuclease family. FEN1 subfamily. Interacts with PCNA. Three molecules of FEN1 bind to one PCNA trimer with each molecule binding to one PCNA monomer. PCNA stimulates the nuclease activity without altering cleavage specificity. Requires Mg(2+) as cofactor. In terms of processing, phosphorylated. Phosphorylation upon DNA damage induces relocalization to the nuclear plasma.

It localises to the nucleus. The protein localises to the nucleolus. Its subcellular location is the nucleoplasm. The protein resides in the mitochondrion. In terms of biological role, structure-specific nuclease with 5'-flap endonuclease and 5'-3' exonuclease activities involved in DNA replication and repair. During DNA replication, cleaves the 5'-overhanging flap structure that is generated by displacement synthesis when DNA polymerase encounters the 5'-end of a downstream Okazaki fragment. It enters the flap from the 5'-end and then tracks to cleave the flap base, leaving a nick for ligation. Also involved in the long patch base excision repair (LP-BER) pathway, by cleaving within the apurinic/apyrimidinic (AP) site-terminated flap. Acts as a genome stabilization factor that prevents flaps from equilibrating into structures that lead to duplications and deletions. Also possesses 5'-3' exonuclease activity on nicked or gapped double-stranded DNA, and exhibits RNase H activity. Also involved in replication and repair of rDNA and in repairing mitochondrial DNA. The sequence is that of Flap endonuclease 1 from Nematostella vectensis (Starlet sea anemone).